The primary structure comprises 208 residues: Thymidylate kinase (208 aa).

Position 11 to 18 (11 to 18 (GGEGVGKS)) interacts with ATP.

This sequence belongs to the thymidylate kinase family.

The enzyme catalyses dTMP + ATP = dTDP + ADP. In terms of biological role, phosphorylation of dTMP to form dTDP in both de novo and salvage pathways of dTTP synthesis. This is Thymidylate kinase from Methylococcus capsulatus (strain ATCC 33009 / NCIMB 11132 / Bath).